Consider the following 37-residue polypeptide: MIEPFLLGIILGLIPITLIGLFVTAYLQYRRGDQLDF.

A helical transmembrane segment spans residues 5 to 25 (FLLGIILGLIPITLIGLFVTA).

This sequence belongs to the PetG family. The 4 large subunits of the cytochrome b6-f complex are cytochrome b6, subunit IV (17 kDa polypeptide, PetD), cytochrome f and the Rieske protein, while the 4 small subunits are PetG, PetL, PetM and PetN. The complex functions as a dimer.

The protein localises to the plastid membrane. Functionally, component of the cytochrome b6-f complex, which mediates electron transfer between photosystem II (PSII) and photosystem I (PSI), cyclic electron flow around PSI, and state transitions. PetG is required for either the stability or assembly of the cytochrome b6-f complex. The sequence is that of Cytochrome b6-f complex subunit 5 from Cuscuta obtusiflora (Peruvian dodder).